Consider the following 102-residue polypeptide: Integration host factor subunit beta (102 aa).

Belongs to the bacterial histone-like protein family. As to quaternary structure, heterodimer of an alpha and a beta chain.

This protein is one of the two subunits of integration host factor, a specific DNA-binding protein that functions in genetic recombination as well as in transcriptional and translational control. The protein is Integration host factor subunit beta (ihfB) of Rhizobium radiobacter (Agrobacterium tumefaciens).